A 353-amino-acid polypeptide reads, in one-letter code: Tsukushi (353 aa).

Positions 1 to 16 are cleaved as a signal peptide; it reads MPWPLLLLLAVSGAQT. One can recognise an LRRNT domain in the interval 17-58; it reads TRPCFPGCQCEVETFGLFDSFSLTRVDCSGLGPHIMPVPIPL. LRR repeat units follow at residues 59–80, 85–106, 109–130, 132–153, 159–179, 185–206, 207–227, 230–249, 255–276, and 280–301; these read DTAHLDLSSNRLEMVNESVLAG, TLAGLDLSHNLLTSISPTAFSR, YLESLDLSHNGLTALPAESFTS, PLSDVNLSHNQLREVSVSAFTT, ALHVDLSHNLIHRLVPHPTRA, TIQSLNLAWNRLHAVPNLRDLP, LRYLSLDGNPLAVIGPGAFAG, GLTHLSLASLQRLPELAPSG, GLQVLDLSGNPKLNWAGAEVFS, and SLQELDLSGTNLVPLPEALLLH. The N-linked (GlcNAc...) asparagine glycan is linked to Asn74. Asn137 carries N-linked (GlcNAc...) asparagine glycosylation.

As to quaternary structure, interacts with FZD4 (via FZ domain); competes with WNT2B for binding to FZD4, inhibiting Wnt signaling and repressing peripheral eye development. Interacts with TGFB1; the interaction contributes to regulation of the hair cycle. Interacts with netrin. Interacts with CCN2.

Its subcellular location is the secreted. Contributes to various developmental events and other processes such as wound healing and cholesterol homeostasis through its interactions with multiple signaling pathways. Wnt signaling inhibitor which competes with WNT2B for binding to Wnt receptor FZD4 and represses WNT2B-dependent development of the peripheral eye. Plays a role in regulating the hair cycle by controlling TGFB1 signaling. Required for the development of the anterior commissure in the brain by inhibiting neurite outgrowth. Essential for terminal differentiation of hippocampal neural stem cells. Plays a role in regulating bone elongation and bone mass by modulating growth plate chondrocyte function and overall body size. Required for development of the inner ear through its involvement in stereocilia formation in inner hair cells. Facilitates wound healing by inhibiting secretion of TGFB1 from macrophages which prevents myofibroblast differentiation, maintaining inflammatory cell quiescence. Plays a role in cholesterol homeostasis by reducing circulating high-density lipoprotein cholesterol, lowering cholesterol efflux capacity and decreasing cholesterol-to-bile acid conversion in the liver. In one study, shown to negatively regulate sympathetic innervation in brown fat, leading to reduced energy expenditure. In another study, shown not to affect brown fat thermogenic capacity, body weight gain or glucose homeostasis. This chain is Tsukushi (TSKU), found in Homo sapiens (Human).